A 102-amino-acid chain; its full sequence is NADH-quinone oxidoreductase subunit K (102 aa).

The next 3 membrane-spanning stretches (helical) occupy residues 6-26, 30-50, and 62-82; these read LEHG…GLMV, ILFV…AFIV, and VMFI…LAIL.

This sequence belongs to the complex I subunit 4L family. NDH-1 is composed of 13 different subunits. Subunits NuoA, H, J, K, L, M, N constitute the membrane sector of the complex.

It is found in the cell inner membrane. It carries out the reaction a quinone + NADH + 5 H(+)(in) = a quinol + NAD(+) + 4 H(+)(out). NDH-1 shuttles electrons from NADH, via FMN and iron-sulfur (Fe-S) centers, to quinones in the respiratory chain. The immediate electron acceptor for the enzyme in this species is believed to be ubiquinone. Couples the redox reaction to proton translocation (for every two electrons transferred, four hydrogen ions are translocated across the cytoplasmic membrane), and thus conserves the redox energy in a proton gradient. The polypeptide is NADH-quinone oxidoreductase subunit K (Pseudomonas putida (strain W619)).